Consider the following 62-residue polypeptide: Small polypeptide DEVIL 17 (62 aa).

The segment at 27-58 (RRNKGCLAMVKERRSRFYIARRCILMLLCWHK) is required for DVL/RTFL small polypeptide activity. A helical transmembrane segment spans residues 39–56 (RRSRFYIARRCILMLLCW).

It belongs to the DVL/RTFL small polypeptides family.

It localises to the cell membrane. Its function is as follows. Small polypeptide acting as a regulatory molecule which coordinates cellular responses required for differentiation, growth and development, probably by restricting polar cell proliferation in lateral organs and coordinating socket cell recruitment and differentiation at trichome sites. This Arabidopsis thaliana (Mouse-ear cress) protein is Small polypeptide DEVIL 17.